The following is a 492-amino-acid chain: ATP synthase subunit beta, chloroplastic (492 aa).

An ATP-binding site is contributed by 170–177; that stretch reads GGAGVGKT.

This sequence belongs to the ATPase alpha/beta chains family. F-type ATPases have 2 components, CF(1) - the catalytic core - and CF(0) - the membrane proton channel. CF(1) has five subunits: alpha(3), beta(3), gamma(1), delta(1), epsilon(1). CF(0) has four main subunits: a(1), b(1), b'(1) and c(9-12).

It is found in the plastid. Its subcellular location is the chloroplast thylakoid membrane. It catalyses the reaction ATP + H2O + 4 H(+)(in) = ADP + phosphate + 5 H(+)(out). Functionally, produces ATP from ADP in the presence of a proton gradient across the membrane. The catalytic sites are hosted primarily by the beta subunits. This Marchantia polymorpha (Common liverwort) protein is ATP synthase subunit beta, chloroplastic.